A 246-amino-acid chain; its full sequence is Tyrosine recombinase XerD-like (246 aa).

Positions 1–72 (MINDINNFIE…AVNQFLFFLY (72 aa)) constitute a Core-binding (CB) domain. Residues 84-246 (QETEKITLAQ…TPITLERYYR (163 aa)) enclose the Tyr recombinase domain. Residues lysine 149 and arginine 212 contribute to the active site. The active-site O-(3'-phospho-DNA)-tyrosine intermediate is the tyrosine 244.

It belongs to the 'phage' integrase family. XerD-like subfamily.

The protein resides in the cytoplasm. Putative tyrosine recombinase. Not involved in the cutting and rejoining of the recombining DNA molecules on dif(SL) site. The chain is Tyrosine recombinase XerD-like from Streptococcus agalactiae serotype V (strain ATCC BAA-611 / 2603 V/R).